Consider the following 356-residue polypeptide: S-adenosylmethionine:tRNA ribosyltransferase-isomerase (356 aa).

It belongs to the QueA family. Monomer.

The protein localises to the cytoplasm. It carries out the reaction 7-aminomethyl-7-carbaguanosine(34) in tRNA + S-adenosyl-L-methionine = epoxyqueuosine(34) in tRNA + adenine + L-methionine + 2 H(+). Its pathway is tRNA modification; tRNA-queuosine biosynthesis. Its function is as follows. Transfers and isomerizes the ribose moiety from AdoMet to the 7-aminomethyl group of 7-deazaguanine (preQ1-tRNA) to give epoxyqueuosine (oQ-tRNA). In Escherichia coli O8 (strain IAI1), this protein is S-adenosylmethionine:tRNA ribosyltransferase-isomerase.